A 603-amino-acid polypeptide reads, in one-letter code: Arginine--tRNA ligase (603 aa).

The 'HIGH' region motif lies at 143–153 (PNIAKEMHVGH).

This sequence belongs to the class-I aminoacyl-tRNA synthetase family. In terms of assembly, monomer.

The protein resides in the cytoplasm. The enzyme catalyses tRNA(Arg) + L-arginine + ATP = L-arginyl-tRNA(Arg) + AMP + diphosphate. The polypeptide is Arginine--tRNA ligase (Prochlorococcus marinus (strain MIT 9211)).